The sequence spans 747 residues: Putative ankyrin repeat protein FPV222 (747 aa).

ANK repeat units follow at residues 38-67 (DNCTMLYTAVEHRYIDIIKLLLDHGADPNI), 103-132 (NYRNTFFVYNENRNLEIAKMLIQNGALVNM), 136-165 (KNITPLHIASSSGSYKMVELLLLHGANTNA), 169-198 (YGETSLHYSVSSNDLNISELLIENGTNVNV), 202-231 (DSITALIIAVEIMSIDLVRLLLDKGADTNA), 234-263 (LERFKLYVTETKQNNNILKYLNTNNVNTNV), 294-323 (PCTVPVTLATRKGSKELLEILLEYGCNPDI), 328-357 (TSTYAMHYAVIRKHYEMLNILIRYDAYTDV), 361-393 (QQNTPAHYAVKLPISESCKYLKLLKLAGASFNL), 397-426 (KGRTPLHTACKYNNTEAVKYLIESGCDTNI), 430-460 (MSFTPLNYAVYYEREDTVKILLESGCVDPNL), 464-493 (KEVSPIIQAIKRNNKNIIKMLLNAGIDIKP), 495-524 (NECYGLHMLAALHNKDLLKWLLCTISELEV), and 529-559 (DHYVPLASYVAELSDIRIMEILIEKGLDLNK).

The chain is Putative ankyrin repeat protein FPV222 from Vertebrata (FPV).